The chain runs to 767 residues: DNA topoisomerase 1 (767 aa).

A compositionally biased stretch (basic and acidic residues) spans 1 to 23 (MSGDHLHNDSQIEADFRLNDSHK). The segment at 1–201 (MSGDHLHNDS…NKKKKPKKEE (201 aa)) is disordered. Residue Ser2 is modified to N-acetylserine. 2 positions are modified to phosphoserine: Ser2 and Ser10. Over residues 24 to 39 (HKDKHKDREHRHKEHK) the composition is skewed to basic residues. A compositionally biased stretch (basic and acidic residues) spans 40 to 110 (KDKDKDREKS…DAKIKKEKEN (71 aa)). Ser59 carries the post-translational modification Phosphoserine. Lys103 is covalently cross-linked (Glycyl lysine isopeptide (Lys-Gly) (interchain with G-Cter in SUMO2)). Residue Lys105 forms a Glycyl lysine isopeptide (Lys-Gly) (interchain with G-Cter in SUMO); alternate linkage. Lys105 participates in a covalent cross-link: Glycyl lysine isopeptide (Lys-Gly) (interchain with G-Cter in SUMO2); alternate. Ser114 carries the phosphoserine modification. A Glycyl lysine isopeptide (Lys-Gly) (interchain with G-Cter in SUMO); alternate cross-link involves residue Lys119. A Glycyl lysine isopeptide (Lys-Gly) (interchain with G-Cter in SUMO2); alternate cross-link involves residue Lys119. Residue Lys119 forms a Glycyl lysine isopeptide (Lys-Gly) (interchain with G-Cter in SUMO1); alternate linkage. Residues 131–168 (PKEDIKPLKRLRDEDDADYKPKKIKTEDIKKEKKRKSE) show a composition bias toward basic and acidic residues. Glycyl lysine isopeptide (Lys-Gly) (interchain with G-Cter in SUMO2) cross-links involve residues Lys136 and Lys150. A Glycyl lysine isopeptide (Lys-Gly) (interchain with G-Cter in SUMO); alternate cross-link involves residue Lys155. Residue Lys155 forms a Glycyl lysine isopeptide (Lys-Gly) (interchain with G-Cter in SUMO2); alternate linkage. Glycyl lysine isopeptide (Lys-Gly) (interchain with G-Cter in SUMO2) cross-links involve residues Lys160 and Lys166. A Glycyl lysine isopeptide (Lys-Gly) (interchain with G-Cter in SUMO2); alternate cross-link involves residue Lys174. Lys174 is modified (N6-acetyllysine; alternate). Basic and acidic residues predominate over residues 181-201 (KDKDKKVAEPDNKKKKPKKEE). Residue Lys206 forms a Glycyl lysine isopeptide (Lys-Gly) (interchain with G-Cter in SUMO2) linkage. Lys282 carries the post-translational modification N6-acetyllysine. Residue Lys338 forms a Glycyl lysine isopeptide (Lys-Gly) (interchain with G-Cter in SUMO2) linkage. Interaction with DNA regions lie at residues 427-428 (KY) and 490-495 (RAGNEK). Residues 434 to 767 (SSRIKGEKDW…IDMTDEDYEF (334 aa)) form the Topo IB-type catalytic domain. Residue Ser508 is modified to Phosphoserine; by CK2. Residue Lys551 forms a Glycyl lysine isopeptide (Lys-Gly) (interchain with G-Cter in SUMO2) linkage. The segment at 587–589 (TAK) is interaction with DNA. Residues Lys644, Lys702, and Lys714 each participate in a glycyl lysine isopeptide (Lys-Gly) (interchain with G-Cter in SUMO2) cross-link. Tyr725 acts as the O-(3'-phospho-DNA)-tyrosine intermediate in catalysis.

The protein belongs to the type IB topoisomerase family. In terms of assembly, monomer. Interacts with ERCC6. Interacts with TPRN; TPRN interacts with a number of DNA damage response proteins, is recruited to sites of DNA damage and may play a role in DNA damage repair. Sumoylated. Lys-119 is the main site of sumoylation. Sumoylation plays a role in partitioning TOP1 between nucleoli and nucleoplasm. Levels are dramatically increased on camptothecin (CPT) treatment. Post-translationally, phosphorylation at Ser-508 by CK2 increases binding to supercoiled DNA and sensitivity to camptothecin.

It localises to the nucleus. The protein localises to the nucleolus. It is found in the nucleoplasm. The enzyme catalyses ATP-independent breakage of single-stranded DNA, followed by passage and rejoining.. Its function is as follows. Releases the supercoiling and torsional tension of DNA introduced during the DNA replication and transcription by transiently cleaving and rejoining one strand of the DNA duplex. Introduces a single-strand break via transesterification at a target site in duplex DNA. The scissile phosphodiester is attacked by the catalytic tyrosine of the enzyme, resulting in the formation of a DNA-(3'-phosphotyrosyl)-enzyme intermediate and the expulsion of a 5'-OH DNA strand. The free DNA strand then rotates around the intact phosphodiester bond on the opposing strand, thus removing DNA supercoils. Finally, in the religation step, the DNA 5'-OH attacks the covalent intermediate to expel the active-site tyrosine and restore the DNA phosphodiester backbone. Regulates the alternative splicing of tissue factor (F3) pre-mRNA in endothelial cells. Involved in the circadian transcription of the core circadian clock component BMAL1 by altering the chromatin structure around the ROR response elements (ROREs) on the BMAL1 promoter. The polypeptide is DNA topoisomerase 1 (Top1) (Mus musculus (Mouse)).